We begin with the raw amino-acid sequence, 938 residues long: MTQSLPLLNGTEAYKLVTTQGLYDKTVKFYEKYLQLVHDKRVGTLTNSLITLKLVVDNSFKPLDVVNDKDWRAIVSSALVFSCTNIQHFRDLAAGETIQAYPNETNPIEIYLKDPNGYIIGITETKNAISIKPTLPKQSVEASLISSRSSRIDIASSGVSTDSSYPAIPKTAKAQKSIAVMTSGGDAPGMNANVRAIVRTAIFKGCNAFVVMEGYEGLVKGGPNYIKQVYWETVRNWSCEGGTNIGTARCKEFREREGRLLGALHLIEAGVDALIVCGGDGSLTGADLFRSEWPSLIRELLDQGRINKVQFDRYQHLNICGTVGSIDNDMSTTDATIGAYSALDRICQAIDYIEATANSHSRAFVVEVMGRNCGWLALLAGISTSADYILIPEKPASSREWQDQMCDIISKHRSRGKRTTIVIVAEGAISADLTPISSKDVHKVLVDRLGLDCRITTLGHVQRGGTAVAYDRILATLQGVEAVNAVLESTPDTPSPLIAINENKITRKPLVESVQLTKSVAEAIHSKDFKKAMQLRDSEFVEHLDNFMAINSADHIEPKLPEHTHMKIAIVNVGAPAGGMNSAVYSMATYCMSQGHKPYAIYNGWTGLTRHESVRSLNWKDLLGWQSRGGSEIGTNRHTPEEADIGLIAYYFQKYGFDGIIIVGGFEAFVSLHQLERARENYTAFRIPMVLIPATLSNNVPGTEYSLGSDTALNSLMQYCDIIKQSAASTRGRVFVVDVQGGNSGYLATHAAVAVGAQVSYVPEEGISLEQLTQDIENLTESFSEAEGRGKFGQLILKSTNASKVLTPEVLAEVITQEAEGHFDAKCAIPGHVQQGGLPSPIDRTRGTRFAIRAVGFIESQHKVLAAEANLDDDDFDFDTPKIIATASVLGVKGSDIVFSSIRQLYDFETELNKRTPKTIHWQSTRTIADHLVGRKKL.

Positions 1–552 (MTQSLPLLNG…HLDNFMAINS (552 aa)) are N-terminal catalytic PFK domain 1. ATP contacts are provided by residues glycine 185, 249–250 (RC), and 279–282 (GDGS). Aspartate 280 is a Mg(2+) binding site. Residues 325 to 327 (SID), arginine 362, 369 to 371 (MGR), glutamate 426, arginine 454, and 460 to 463 (HVQR) each bind beta-D-fructose 6-phosphate. The active-site Proton acceptor is the aspartate 327. Positions 553–566 (ADHIEPKLPEHTHM) are interdomain linker. Residues 567 to 938 (KIAIVNVGAP…ADHLVGRKKL (372 aa)) are C-terminal regulatory PFK domain 2. Beta-D-fructose 2,6-bisphosphate contacts are provided by residues arginine 637, 695–699 (TLSNN), arginine 733, 740–742 (QGG), lysine 826, 832–835 (HVQQ), and arginine 915.

This sequence belongs to the phosphofructokinase type A (PFKA) family. ATP-dependent PFK group I subfamily. Eukaryotic two domain clade 'E' sub-subfamily. Heterooctamer of 4 alpha and 4 beta chains. Requires Mg(2+) as cofactor.

It localises to the cytoplasm. It carries out the reaction beta-D-fructose 6-phosphate + ATP = beta-D-fructose 1,6-bisphosphate + ADP + H(+). The protein operates within carbohydrate degradation; glycolysis; D-glyceraldehyde 3-phosphate and glycerone phosphate from D-glucose: step 3/4. Its activity is regulated as follows. Allosterically activated by ADP, AMP, or fructose 2,6-bisphosphate, and allosterically inhibited by ATP or citrate. In terms of biological role, catalyzes the phosphorylation of D-fructose 6-phosphate to fructose 1,6-bisphosphate by ATP, the first committing step of glycolysis. The polypeptide is ATP-dependent 6-phosphofructokinase subunit beta (PFK2) (Kluyveromyces lactis (strain ATCC 8585 / CBS 2359 / DSM 70799 / NBRC 1267 / NRRL Y-1140 / WM37) (Yeast)).